The primary structure comprises 423 residues: Innexin eat-5 (423 aa).

Helical transmembrane passes span 25–41, 102–122, 277–297, and 341–361; these read YYYS…TITA, PFIM…WSML, IFLF…FDSI, and HSIL…IILL.

Belongs to the pannexin family. Heterooligomer of eat-5 and another innexin. Expressed in pharyngeal muscles.

It localises to the cell membrane. The protein localises to the cell junction. Its subcellular location is the gap junction. Its function is as follows. Structural component of the gap junctions. Required for synchronized pharyngeal muscle contractions. This Caenorhabditis elegans protein is Innexin eat-5 (eat-5).